The primary structure comprises 1500 residues: ABC transporter G family member 42 (1500 aa).

Positions 26–56 are disordered; sequence VDEAFMPQNSGGGGGSRGRRRSGRGGTADDD. The region spanning 182 to 455 is the ABC transporter 1 domain; the sequence is LGLVGVRPGR…FESCGFRCPE (274 aa). 215 to 222 contributes to the ATP binding site; it reads GPPSSGKT. One can recognise an ABC transmembrane type-2 1 domain in the interval 533–746; it reads ELLKASFAKE…GYNALAVNEF (214 aa). 7 helical membrane-spanning segments follow: residues 551-571, 584-604, 639-659, 670-690, 695-715, 724-744, and 783-803; these read FVYI…STVF, GFVY…NGFA, IPFS…TIGF, LLLV…TAGL, IIAQ…GGFL, WWIW…LAVN, and FWIG…LFTL. Over residues 822-834 the composition is skewed to basic and acidic residues; the sequence is TAKEAEGNGDARH. The disordered stretch occupies residues 822–850; it reads TAKEAEGNGDARHTVRNGSTKSNGGNHKE. Residues 837–846 show a composition bias toward polar residues; it reads RNGSTKSNGG. Positions 894 to 1151 constitute an ABC transporter 2 domain; that stretch reads MSFDDVNYYV…KMIEYFEAIP (258 aa). ATP is bound at residue 939 to 946; sequence GVSGAGKT. The region spanning 1224 to 1438 is the ABC transmembrane type-2 2 domain; it reads GQFRACLWKQ…TVYGLIVTQY (215 aa). 7 helical membrane-spanning segments follow: residues 1245-1265, 1277-1297, 1331-1351, 1358-1378, 1388-1408, 1416-1436, and 1472-1492; these read LVRF…FWKI, MVIG…CATV, IPYV…MMSF, FFWF…YGMM, VAAI…GFFI, WWIW…LIVT, and VVAP…AICI.

Belongs to the ABC transporter superfamily. ABCG family. PDR (TC 3.A.1.205) subfamily.

It localises to the membrane. May be a general defense protein. The chain is ABC transporter G family member 42 from Oryza sativa subsp. japonica (Rice).